Reading from the N-terminus, the 421-residue chain is Prenyltransferase asqH2 (421 aa).

Residues 1–28 (MDRNSFTAYGPATGAITESGEQENDHTK) are disordered. Glu-105 contacts L-tryptophan. Substrate-binding residues include Arg-119, Arg-272, Lys-274, Tyr-276, and Tyr-341.

It belongs to the tryptophan dimethylallyltransferase family.

It carries out the reaction yaequinolone E + dimethylallyl diphosphate + H2O = [(1'E)-3'-hydroxy-3',7'-dimethylocta-1',6'-dien-1'-yl]-quinolinone B + diphosphate. It functions in the pathway secondary metabolite biosynthesis. The protein operates within alkaloid biosynthesis. Its pathway is mycotoxin biosynthesis. In terms of biological role, prenyltransferase; part of the gene cluster that mediates the biosynthesis of the aspoquinolone mycotoxins. Within the pathway, the prenyltransferase asqH2 performs the second alkylation with DMAPP at delta(3') double bond to yield a carbenium ion intermediate, which can be attacked by H(2)O to yield a styrenyl quinolone containing a C3'-hydroxyprenyl chain. The first step of the pathway is catalyzed by the nonribosomal peptide synthetase asqK that condenses anthranilic acid and O-methyl-L-tyrosine to produce 4'-methoxycyclopeptin. 4'-methoxycyclopeptin is then converted to 4'-methoxydehydrocyclopeptin by the ketoglutarate-dependent dioxygenase asqJ. AsqJ also converts its first product 4'-methoxydehydrocyclopeptin to 4'-methoxycyclopenin. The following conversion of 4'-methoxycyclopenin into 4'-methoxyviridicatin is catalyzed by the cyclopenase asqI. 4'-methoxyviridicatin is the precursor of quinolone natural products, and is further converted to quinolinone B. The prenyltransferase asqH1 then catalyzes the canonical Friedel-Crafts alkylation of quinolinone B with dimethylallyl cation to yield dimethylallyl quinolone, which is subjected to FAD-dependent dehydrogenation by the FAD-linked oxidoreductase asqF to yield conjugated aryl diene. The delta(3') double bond then serves as the site of the second alkylation with DMAPP catalyzed by the prenyltransferase asqH2 to yield a carbenium ion intermediate, which can be attacked by H(2)O to yield a styrenyl quinolone containing a C3'-hydroxyprenyl chain. The FAD-dependent monooxygenase asqG performs epoxidation of the terminal C7'-C8' olefin. Finally, after dehydratation of the epoxide at C3 by asqC, the quinolone epoxide rearrangement protein asqO catalyzes an enzymatic 3-exo-tet cyclization to yield the cyclopropyl-THF ring system in aspoquinolone. This Emericella nidulans (strain FGSC A4 / ATCC 38163 / CBS 112.46 / NRRL 194 / M139) (Aspergillus nidulans) protein is Prenyltransferase asqH2.